Consider the following 292-residue polypeptide: uncharacterized protein (292 aa).

The signal sequence occupies residues Met-1–Gly-21. The interval Met-1–Leu-30 is disordered.

This is an uncharacterized protein from Treponema pallidum (strain Nichols).